The chain runs to 229 residues: Potassium/proton antiporter CemA (229 aa).

The next 4 membrane-spanning stretches (helical) occupy residues Thr11–Phe31, Ile118–Leu138, Leu158–Ile178, and Leu190–Tyr210.

This sequence belongs to the CemA family.

It is found in the plastid. The protein resides in the chloroplast inner membrane. The catalysed reaction is K(+)(in) + H(+)(out) = K(+)(out) + H(+)(in). Its function is as follows. Contributes to K(+)/H(+) antiport activity by supporting proton efflux to control proton extrusion and homeostasis in chloroplasts in a light-dependent manner to modulate photosynthesis. Prevents excessive induction of non-photochemical quenching (NPQ) under continuous-light conditions. Indirectly promotes efficient inorganic carbon uptake into chloroplasts. The chain is Potassium/proton antiporter CemA from Pelargonium hortorum (Common geranium).